We begin with the raw amino-acid sequence, 296 residues long: Fructose-bisphosphate aldolase class 1 (296 aa).

E175 (proton acceptor) is an active-site residue. The active-site Schiff-base intermediate with dihydroxyacetone-P is K212.

Belongs to the class I fructose-bisphosphate aldolase family.

The enzyme catalyses beta-D-fructose 1,6-bisphosphate = D-glyceraldehyde 3-phosphate + dihydroxyacetone phosphate. It functions in the pathway carbohydrate degradation; glycolysis; D-glyceraldehyde 3-phosphate and glycerone phosphate from D-glucose: step 4/4. The polypeptide is Fructose-bisphosphate aldolase class 1 (Staphylococcus haemolyticus (strain JCSC1435)).